A 121-amino-acid chain; its full sequence is ATP synthase epsilon chain (121 aa).

This sequence belongs to the ATPase epsilon chain family. As to quaternary structure, F-type ATPases have 2 components, CF(1) - the catalytic core - and CF(0) - the membrane proton channel. CF(1) has five subunits: alpha(3), beta(3), gamma(1), delta(1), epsilon(1). CF(0) has three main subunits: a, b and c.

It is found in the cell membrane. Its function is as follows. Produces ATP from ADP in the presence of a proton gradient across the membrane. The chain is ATP synthase epsilon chain from Mycobacterium sp. (strain JLS).